The primary structure comprises 692 residues: Follicle-stimulating hormone receptor (692 aa).

The first 17 residues, 1–17 (MALLLVSLLAFLGSGSG), serve as a signal peptide directing secretion. 2 cysteine pairs are disulfide-bonded: Cys-18–Cys-25 and Cys-23–Cys-32. One can recognise an LRRNT domain in the interval 18–46 (CHHWLCHCSNRVFLCQDSKVTEIPPDLPR). Residues 18 to 365 (CHHWLCHCSN…EDIMGYNILR (348 aa)) lie on the Extracellular side of the membrane. LRR repeat units lie at residues 49–72 (IELR…FGDL), 73–97 (EKIE…LPNL), 98–118 (HEIR…AFQN), 119–143 (LPSL…KIQS), 144–169 (LQKV…MGLS), 170–192 (FESV…AFNG), 193–216 (TQLD…VFQG), 217–240 (ASGP…GLEN), and 241–259 (LKKL…PSLD). N-linked (GlcNAc...) asparagine glycans are attached at residues Asn-191 and Asn-199. 4 cysteine pairs are disulfide-bonded: Cys-275–Cys-345, Cys-276–Cys-292, Cys-276–Cys-355, and Cys-292–Cys-337. N-linked (GlcNAc...) asparagine glycosylation occurs at Asn-293. Tyr-334 is subject to Sulfotyrosine. The chain crosses the membrane as a helical span at residues 366-386 (VLIWFISILAITGNTTVLVVL). The Cytoplasmic portion of the chain corresponds to 387-397 (TTSQYKLTVPR). A helical transmembrane segment spans residues 398–420 (FLMCNLAFADLCIGIYLLLIASV). Residues 421–442 (DIHTKSQYHNYAIDWQTGAGCD) are Extracellular-facing. A disulfide bridge links Cys-441 with Cys-516. A helical transmembrane segment spans residues 443 to 464 (AAGFFTVFASELSVYTLAAITL). Residues 465 to 484 (ERWHTITHAMQLECKVQLCH) lie on the Cytoplasmic side of the membrane. Residues 485-507 (AASIMVLGWAFAFAAALFPIFGI) form a helical membrane-spanning segment. The Extracellular segment spans residues 508-527 (SSYMKVSICLPMDIDSPLSQ). The chain crosses the membrane as a helical span at residues 528-549 (LYVMALLVLNALAFVVICGCYT). Residues 550 to 572 (HIYLTVRNPNIVSSSRDTKIAKR) are Cytoplasmic-facing. A helical membrane pass occupies residues 573–596 (MATLIFTDFLCMAPILFFAISASL). The Extracellular segment spans residues 597 to 607 (KVPLITVSKAK). Residues 608 to 629 (ILLVLFYPINSCANPFLYAIFT) traverse the membrane as a helical segment. The Cytoplasmic segment spans residues 630 to 692 (KNFRRDFFVL…LVPLNHSVQN (63 aa)).

This sequence belongs to the G-protein coupled receptor 1 family. FSH/LSH/TSH subfamily. As to quaternary structure, homotrimer. Functions as a homotrimer binding the FSH hormone heterodimer composed of CGA and FSHB. Interacts with ARRB2. Interacts with APPL2; interaction is independent of follicle stimulating hormone stimulation. In terms of processing, N-glycosylated; indirectly required for FSH-binding, possibly via a conformational change that allows high affinity binding of hormone. Post-translationally, sulfated.

It is found in the cell membrane. G protein-coupled receptor for follitropin, the follicle-stimulating hormone. Through cAMP production activates the downstream PI3K-AKT and ERK1/ERK2 signaling pathways. The sequence is that of Follicle-stimulating hormone receptor (Fshr) from Mus musculus (Mouse).